The primary structure comprises 336 residues: Anthranilate phosphoribosyltransferase (336 aa).

5-phospho-alpha-D-ribose 1-diphosphate is bound by residues glycine 82, 85–86, threonine 90, 92–95, 110–118, and serine 122; these read GD, NVST, and KHGNRSVSS. Position 82 (glycine 82) interacts with anthranilate. Residue serine 94 coordinates Mg(2+). Asparagine 113 is a binding site for anthranilate. Arginine 168 contributes to the anthranilate binding site. The Mg(2+) site is built by aspartate 227 and glutamate 228.

The protein belongs to the anthranilate phosphoribosyltransferase family. Homodimer. It depends on Mg(2+) as a cofactor.

It carries out the reaction N-(5-phospho-beta-D-ribosyl)anthranilate + diphosphate = 5-phospho-alpha-D-ribose 1-diphosphate + anthranilate. Its pathway is amino-acid biosynthesis; L-tryptophan biosynthesis; L-tryptophan from chorismate: step 2/5. Its function is as follows. Catalyzes the transfer of the phosphoribosyl group of 5-phosphorylribose-1-pyrophosphate (PRPP) to anthranilate to yield N-(5'-phosphoribosyl)-anthranilate (PRA). In Leptospira borgpetersenii serovar Hardjo-bovis (strain JB197), this protein is Anthranilate phosphoribosyltransferase.